Reading from the N-terminus, the 225-residue chain is Phosphatidylserine decarboxylase proenzyme (225 aa).

Serine 188 serves as the catalytic Schiff-base intermediate with substrate; via pyruvic acid. Serine 188 is subject to Pyruvic acid (Ser); by autocatalysis.

It belongs to the phosphatidylserine decarboxylase family. PSD-A subfamily. Heterodimer of a large membrane-associated beta subunit and a small pyruvoyl-containing alpha subunit. Requires pyruvate as cofactor. Post-translationally, is synthesized initially as an inactive proenzyme. Formation of the active enzyme involves a self-maturation process in which the active site pyruvoyl group is generated from an internal serine residue via an autocatalytic post-translational modification. Two non-identical subunits are generated from the proenzyme in this reaction, and the pyruvate is formed at the N-terminus of the alpha chain, which is derived from the carboxyl end of the proenzyme. The post-translation cleavage follows an unusual pathway, termed non-hydrolytic serinolysis, in which the side chain hydroxyl group of the serine supplies its oxygen atom to form the C-terminus of the beta chain, while the remainder of the serine residue undergoes an oxidative deamination to produce ammonia and the pyruvoyl prosthetic group on the alpha chain.

It localises to the cell membrane. The enzyme catalyses a 1,2-diacyl-sn-glycero-3-phospho-L-serine + H(+) = a 1,2-diacyl-sn-glycero-3-phosphoethanolamine + CO2. It participates in phospholipid metabolism; phosphatidylethanolamine biosynthesis; phosphatidylethanolamine from CDP-diacylglycerol: step 2/2. In terms of biological role, catalyzes the formation of phosphatidylethanolamine (PtdEtn) from phosphatidylserine (PtdSer). The protein is Phosphatidylserine decarboxylase proenzyme of Parvibaculum lavamentivorans (strain DS-1 / DSM 13023 / NCIMB 13966).